Reading from the N-terminus, the 392-residue chain is tRNA(Met) cytidine acetate ligase (392 aa).

Residues 7 to 20 (VVEYNPFHNGHQLH), glycine 101, asparagine 162, and 187 to 188 (RI) each bind ATP.

This sequence belongs to the TmcAL family.

It localises to the cytoplasm. It catalyses the reaction cytidine(34) in elongator tRNA(Met) + acetate + ATP = N(4)-acetylcytidine(34) in elongator tRNA(Met) + AMP + diphosphate. Its function is as follows. Catalyzes the formation of N(4)-acetylcytidine (ac(4)C) at the wobble position of elongator tRNA(Met), using acetate and ATP as substrates. First activates an acetate ion to form acetyladenylate (Ac-AMP) and then transfers the acetyl group to tRNA to form ac(4)C34. The sequence is that of tRNA(Met) cytidine acetate ligase from Listeria welshimeri serovar 6b (strain ATCC 35897 / DSM 20650 / CCUG 15529 / CIP 8149 / NCTC 11857 / SLCC 5334 / V8).